Here is a 245-residue protein sequence, read N- to C-terminus: 1-(5-phosphoribosyl)-5-[(5-phosphoribosylamino)methylideneamino] imidazole-4-carboxamide isomerase (245 aa).

The Proton acceptor role is filled by Asp-7. The Proton donor role is filled by Asp-129.

The protein belongs to the HisA/HisF family.

It is found in the cytoplasm. It catalyses the reaction 1-(5-phospho-beta-D-ribosyl)-5-[(5-phospho-beta-D-ribosylamino)methylideneamino]imidazole-4-carboxamide = 5-[(5-phospho-1-deoxy-D-ribulos-1-ylimino)methylamino]-1-(5-phospho-beta-D-ribosyl)imidazole-4-carboxamide. The protein operates within amino-acid biosynthesis; L-histidine biosynthesis; L-histidine from 5-phospho-alpha-D-ribose 1-diphosphate: step 4/9. The polypeptide is 1-(5-phosphoribosyl)-5-[(5-phosphoribosylamino)methylideneamino] imidazole-4-carboxamide isomerase (Salmonella enteritidis PT4 (strain P125109)).